Here is a 159-residue protein sequence, read N- to C-terminus: MIEGVMKEGFITTSYDSVVNWAKTGSLWPMTFGLACCAVEMMHAAAARYDLGRFGAEVFRASPRQSDLMIVAGTLCNKMAPALRKVYDQMAEPRWVISMGSCANGGGYYHYSYSVVRGCDRIVPVDVYVPGCPPTAEALIYGIIQLQQKIRRTHTIARA.

Residues cysteine 36, cysteine 37, cysteine 102, and cysteine 132 each coordinate [4Fe-4S] cluster.

It belongs to the complex I 20 kDa subunit family. In terms of assembly, NDH-1 is composed of 14 different subunits. Subunits NuoB, C, D, E, F, and G constitute the peripheral sector of the complex. [4Fe-4S] cluster is required as a cofactor.

It localises to the cell inner membrane. It carries out the reaction a quinone + NADH + 5 H(+)(in) = a quinol + NAD(+) + 4 H(+)(out). In terms of biological role, NDH-1 shuttles electrons from NADH, via FMN and iron-sulfur (Fe-S) centers, to quinones in the respiratory chain. The immediate electron acceptor for the enzyme in this species is believed to be ubiquinone. Couples the redox reaction to proton translocation (for every two electrons transferred, four hydrogen ions are translocated across the cytoplasmic membrane), and thus conserves the redox energy in a proton gradient. In Acidovorax ebreus (strain TPSY) (Diaphorobacter sp. (strain TPSY)), this protein is NADH-quinone oxidoreductase subunit B.